The chain runs to 479 residues: Citrate synthase, mitochondrial (479 aa).

A mitochondrion-targeting transit peptide spans 1–37 (MSAILSTTSKSFLSRGSTRQCQNMQKALFALLNARHY). Residues histidine 312, histidine 358, and aspartate 413 contribute to the active site. Serine 462 carries the post-translational modification Phosphoserine.

Belongs to the citrate synthase family. In terms of assembly, monomer and homodimer. Exists as an inactive monomer when phosphorylated. Homodimerization is dependent on dephosphorylation of Ser-462 by PTC7 and is required for activity. Phosphorylation at Ser-462. Dephosphorylated at Ser-462 by PTC7.

Its subcellular location is the mitochondrion matrix. The enzyme catalyses oxaloacetate + acetyl-CoA + H2O = citrate + CoA + H(+). It participates in carbohydrate metabolism; tricarboxylic acid cycle; isocitrate from oxaloacetate: step 1/2. Phosphorylation at Ser-462 inhibits catalytic activity. Dephosphorylation at Ser-462 by PTC7 enhances catalytic activity. Functionally, specific citrate synthase with catalytic activity only with acetyl-CoA. The protein is Citrate synthase, mitochondrial of Saccharomyces cerevisiae (strain ATCC 204508 / S288c) (Baker's yeast).